Here is a 179-residue protein sequence, read N- to C-terminus: Ribosome maturation factor RimM (179 aa).

One can recognise a PRC barrel domain in the interval 101–179 (EGEVYVHDLC…VELMHRWILE (79 aa)).

The protein belongs to the RimM family. As to quaternary structure, binds ribosomal protein uS19.

Its subcellular location is the cytoplasm. In terms of biological role, an accessory protein needed during the final step in the assembly of 30S ribosomal subunit, possibly for assembly of the head region. Essential for efficient processing of 16S rRNA. May be needed both before and after RbfA during the maturation of 16S rRNA. It has affinity for free ribosomal 30S subunits but not for 70S ribosomes. In Treponema denticola (strain ATCC 35405 / DSM 14222 / CIP 103919 / JCM 8153 / KCTC 15104), this protein is Ribosome maturation factor RimM.